Consider the following 205-residue polypeptide: Glutathione peroxidase 1 (205 aa).

Ser-37 carries the phosphoserine modification. Residue Sec-52 is part of the active site. Residue Sec-52 is a non-standard amino acid, selenocysteine. An N6-acetyllysine; alternate mark is found at Lys-91 and Lys-117. Residues Lys-91 and Lys-117 each carry the N6-succinyllysine; alternate modification. N-linked (Glc) (glycation) lysine; in vitro glycosylation is present at Lys-117. Lys-124 carries the N6-acetyllysine modification. An N6-acetyllysine; alternate modification is found at Lys-151. The residue at position 151 (Lys-151) is an N6-succinyllysine; alternate. Phosphoserine is present on residues Ser-200 and Ser-204.

The protein belongs to the glutathione peroxidase family. In terms of assembly, homotetramer. Interacts with MIEN1. In terms of processing, during periods of oxidative stress, Sec-52 may react with a superoxide radical, irreversibly lose hydroselenide and be converted to dehydroalanine.

The protein resides in the cytoplasm. It is found in the mitochondrion. The enzyme catalyses 2 glutathione + H2O2 = glutathione disulfide + 2 H2O. It carries out the reaction a hydroperoxy polyunsaturated fatty acid + 2 glutathione = a hydroxy polyunsaturated fatty acid + glutathione disulfide + H2O. It catalyses the reaction tert-butyl hydroperoxide + 2 glutathione = tert-butanol + glutathione disulfide + H2O. The catalysed reaction is cumene hydroperoxide + 2 glutathione = 2-phenylpropan-2-ol + glutathione disulfide + H2O. The enzyme catalyses (13S)-hydroperoxy-(9Z,11E)-octadecadienoate + 2 glutathione = (13S)-hydroxy-(9Z,11E)-octadecadienoate + glutathione disulfide + H2O. It carries out the reaction (9S)-hydroperoxy-(10E,12Z)-octadecadienoate + 2 glutathione = (9S)-hydroxy-(10E,12Z)-octadecadienoate + glutathione disulfide + H2O. It catalyses the reaction (5S)-hydroperoxy-(6E,8Z,11Z,14Z)-eicosatetraenoate + 2 glutathione = (5S)-hydroxy-(6E,8Z,11Z,14Z)-eicosatetraenoate + glutathione disulfide + H2O. The catalysed reaction is (12S)-hydroperoxy-(5Z,8Z,10E,14Z)-eicosatetraenoate + 2 glutathione = (12S)-hydroxy-(5Z,8Z,10E,14Z)-eicosatetraenoate + glutathione disulfide + H2O. The enzyme catalyses (12R)-hydroperoxy-(5Z,8Z,10E,14Z)-eicosatetraenoate + 2 glutathione = (12R)-hydroxy-(5Z,8Z,10E,14Z)-eicosatetraenoate + glutathione disulfide + H2O. It carries out the reaction (15S)-hydroperoxy-(5Z,8Z,11Z,13E)-eicosatetraenoate + 2 glutathione = (15S)-hydroxy-(5Z,8Z,11Z,13E)-eicosatetraenoate + glutathione disulfide + H2O. It catalyses the reaction (5S)-hydroperoxy-(6E,8Z,11Z,14Z,17Z)-eicosapentaenoate + 2 glutathione = (5S)-hydroxy-(6E,8Z,11Z,14Z,17Z)-eicosapentaenoate + glutathione disulfide + H2O. The catalysed reaction is (15S)-hydroperoxy-(5Z,8Z,11Z,13E,17Z)-eicosapentaenoate + 2 glutathione = (15S)-hydroxy-(5Z,8Z,11Z,13E,17Z)-eicosapentaenoate + glutathione disulfide + H2O. The enzyme catalyses (15S)-hydroperoxy-(11Z,13E)-eicosadienoate + 2 glutathione = (15S)-hydroxy-(11Z,13E)-eicosadienoate + glutathione disulfide + H2O. It carries out the reaction (17S)-hydroperoxy-(4Z,7Z,10Z,13Z,15E,19Z)-docosahexaenoate + 2 glutathione = (17S)-hydroxy-(4Z,7Z,10Z,13Z,15E,19Z)-docosahexaenoate + glutathione disulfide + H2O. Its function is as follows. Catalyzes the reduction of hydroperoxides in a glutathione-dependent manner thus regulating cellular redox homeostasis. Can reduce small soluble hydroperoxides such as H2O2, cumene hydroperoxide and tert-butyl hydroperoxide, as well as several fatty acid-derived hydroperoxides. In platelets catalyzes the reduction of 12-hydroperoxyeicosatetraenoic acid, the primary product of the arachidonate 12-lipoxygenase pathway. In Bos taurus (Bovine), this protein is Glutathione peroxidase 1 (GPX1).